A 542-amino-acid chain; its full sequence is CTP synthase (542 aa).

An amidoligase domain region spans residues 1–265; the sequence is MARYVFITGG…DSEVLSAFGI (265 aa). Ser13 provides a ligand contact to CTP. Ser13 is a binding site for UTP. Residue 14-19 participates in ATP binding; it reads SLGKGI. An L-glutamine-binding site is contributed by Tyr54. Asp71 is an ATP binding site. Positions 71 and 139 each coordinate Mg(2+). Residues 146-148, 186-191, and Lys222 contribute to the CTP site; these read DIE and KTKPTQ. Residues 186–191 and Lys222 contribute to the UTP site; that span reads KTKPTQ. The Glutamine amidotransferase type-1 domain occupies 291–541; it reads TIAVVGKYTG…IEAAIEQSRL (251 aa). Gly353 contacts L-glutamine. Cys380 (nucleophile; for glutamine hydrolysis) is an active-site residue. Residues 381 to 384, Glu404, and Arg469 each bind L-glutamine; that span reads FGMQ. Active-site residues include His514 and Glu516.

It belongs to the CTP synthase family. As to quaternary structure, homotetramer.

The enzyme catalyses UTP + L-glutamine + ATP + H2O = CTP + L-glutamate + ADP + phosphate + 2 H(+). The catalysed reaction is L-glutamine + H2O = L-glutamate + NH4(+). It catalyses the reaction UTP + NH4(+) + ATP = CTP + ADP + phosphate + 2 H(+). Its pathway is pyrimidine metabolism; CTP biosynthesis via de novo pathway; CTP from UDP: step 2/2. Allosterically activated by GTP, when glutamine is the substrate; GTP has no effect on the reaction when ammonia is the substrate. The allosteric effector GTP functions by stabilizing the protein conformation that binds the tetrahedral intermediate(s) formed during glutamine hydrolysis. Inhibited by the product CTP, via allosteric rather than competitive inhibition. Its function is as follows. Catalyzes the ATP-dependent amination of UTP to CTP with either L-glutamine or ammonia as the source of nitrogen. Regulates intracellular CTP levels through interactions with the four ribonucleotide triphosphates. The sequence is that of CTP synthase from Brucella suis (strain ATCC 23445 / NCTC 10510).